We begin with the raw amino-acid sequence, 356 residues long: GDP-mannose:di-myo-inositol-1,3'-phosphate beta-1,2-mannosyltransferase (356 aa).

This sequence belongs to the MDIP synthase family. Requires Mg(2+) as cofactor.

The enzyme catalyses bis(myo-inositol) 1,3'-phosphate + GDP-alpha-D-mannose = 2-O-(beta-D-mannosyl)-bis(myo-inositol) 1,3'-phosphate + GDP + H(+). It catalyses the reaction 2-O-(beta-D-mannosyl)-bis(myo-inositol) 1,3'-phosphate + GDP-alpha-D-mannose = 2-O-(beta-D-mannosyl-(1-&gt;2)-beta-D-mannosyl)-bis(myo-inositol) 1,3'-phosphate + GDP + H(+). The catalysed reaction is bis(myo-inositol) 1,3'-phosphate + 2 GDP-alpha-D-mannose = 2-O-(beta-D-mannosyl-(1-&gt;2)-beta-D-mannosyl)-bis(myo-inositol) 1,3'-phosphate + 2 GDP + 2 H(+). Functionally, catalyzes the transfer of the mannosyl group from GDP-mannose to di-myo-inositol-1,3'-phosphate (DIP), producing mannosyl-di-myo-inositol phosphate (MDIP). Can also use MDIP as an acceptor of a second mannose residue, yielding di-mannosyl-di-myo-inositol phosphate (MMDIP). Minor amounts of the tri-mannosylated form are also formed. This is GDP-mannose:di-myo-inositol-1,3'-phosphate beta-1,2-mannosyltransferase from Thermotoga maritima (strain ATCC 43589 / DSM 3109 / JCM 10099 / NBRC 100826 / MSB8).